A 446-amino-acid polypeptide reads, in one-letter code: Eukaryotic translation initiation factor 3 subunit E (446 aa).

Residues 256 to 425 (TDLFFSPAYI…GTVIMNHPPQ (170 aa)) enclose the PCI domain.

The protein belongs to the eIF-3 subunit E family. Component of the eukaryotic translation initiation factor 3 (eIF-3) complex.

It is found in the cytoplasm. Component of the eukaryotic translation initiation factor 3 (eIF-3) complex, which is involved in protein synthesis of a specialized repertoire of mRNAs and, together with other initiation factors, stimulates binding of mRNA and methionyl-tRNAi to the 40S ribosome. The eIF-3 complex specifically targets and initiates translation of a subset of mRNAs involved in cell proliferation. This Aspergillus terreus (strain NIH 2624 / FGSC A1156) protein is Eukaryotic translation initiation factor 3 subunit E (int6).